Reading from the N-terminus, the 204-residue chain is Ribosome maturation factor RimP (204 aa).

Positions 176 to 204 (GNFDESQFDEIEESEGEEADEAEQPPTKH) are disordered. Positions 181 to 198 (SQFDEIEESEGEEADEAE) are enriched in acidic residues.

It belongs to the RimP family.

The protein resides in the cytoplasm. Its function is as follows. Required for maturation of 30S ribosomal subunits. The sequence is that of Ribosome maturation factor RimP from Cereibacter sphaeroides (strain KD131 / KCTC 12085) (Rhodobacter sphaeroides).